The following is a 289-amino-acid chain: Diaminopimelate epimerase (289 aa).

Substrate-binding residues include Asn11 and Asn78. Cys87 functions as the Proton donor in the catalytic mechanism. Substrate-binding positions include 88 to 89, Asn163, Asn199, and 217 to 218; these read GN and ER. Residue Cys226 is the Proton acceptor of the active site. 227-228 serves as a coordination point for substrate; that stretch reads GT.

It belongs to the diaminopimelate epimerase family. Homodimer.

The protein localises to the cytoplasm. It carries out the reaction (2S,6S)-2,6-diaminopimelate = meso-2,6-diaminopimelate. It functions in the pathway amino-acid biosynthesis; L-lysine biosynthesis via DAP pathway; DL-2,6-diaminopimelate from LL-2,6-diaminopimelate: step 1/1. Functionally, catalyzes the stereoinversion of LL-2,6-diaminopimelate (L,L-DAP) to meso-diaminopimelate (meso-DAP), a precursor of L-lysine and an essential component of the bacterial peptidoglycan. The chain is Diaminopimelate epimerase from Rhodococcus opacus (strain B4).